Consider the following 548-residue polypeptide: Pentatricopeptide repeat-containing protein At1g62680, mitochondrial (548 aa).

Residues 1 to 43 (MQRSIAMTAKRFLHRNLLENGKPRTASSPSFSHCSSCRCWVRA) constitute a mitochondrion transit peptide. PPR repeat units follow at residues 84–118 (SIVD…GIRN), 119–153 (DLYT…GYEP), 154–188 (DRVT…GYKP), 189–223 (DIVA…GIRP), 224–258 (NVVT…KITP), 259–293 (NVIT…SIDP), 294–328 (DIVT…GCLA), 329–363 (DVVS…GLVS), 364–398 (NTVT…GISP), 399–433 (DIWT…EMDL), 434–468 (DIVT…GLKP), and 469–503 (DIVT…GLMK).

The protein belongs to the PPR family. P subfamily.

It is found in the mitochondrion. The protein is Pentatricopeptide repeat-containing protein At1g62680, mitochondrial of Arabidopsis thaliana (Mouse-ear cress).